Here is a 111-residue protein sequence, read N- to C-terminus: Putative G antigen family E member 3 (111 aa).

The tract at residues 1–67 is disordered; it reads MSEHVRTRSQ…EGAPAVQGPD (67 aa). Residues 8–24 are compositionally biased toward polar residues; the sequence is RSQSSERGNDQESSQPV. Residue Thr-97 is modified to Phosphothreonine.

It belongs to the GAGE family.

In Homo sapiens (Human), this protein is Putative G antigen family E member 3 (PAGE2B).